A 160-amino-acid polypeptide reads, in one-letter code: uncharacterized protein (160 aa).

This is an uncharacterized protein from Bacillus subtilis (strain 168).